A 244-amino-acid polypeptide reads, in one-letter code: Lymphotoxin-beta (244 aa).

The Cytoplasmic portion of the chain corresponds to 1–18 (MGALGLEGRGGRLQGRGS). The chain crosses the membrane as a helical; Signal-anchor for type II membrane protein span at residues 19–48 (LLLAVAGATSLVTLLLAVPITVLAVLALVP). Over 49 to 244 (QDQGGLVTDT…KTFFGAVMVG (196 aa)) the chain is Extracellular. Residues 88–243 (PAAHLIGAPL…GKTFFGAVMV (156 aa)) form the THD domain. N-linked (GlcNAc...) asparagine glycosylation is present at asparagine 222.

The protein belongs to the tumor necrosis factor family. As to quaternary structure, heterotrimer of either two LTB and one LTA subunits or (less prevalent) two LTA and one LTB subunits.

The protein localises to the membrane. In terms of biological role, cytokine that binds to LTBR/TNFRSF3. May play a specific role in immune response regulation. Provides the membrane anchor for the attachment of the heterotrimeric complex to the cell surface. In Macaca mulatta (Rhesus macaque), this protein is Lymphotoxin-beta (LTB).